The primary structure comprises 151 residues: Sec-independent protein translocase protein TatB (151 aa).

The chain crosses the membrane as a helical span at residues 1 to 21; sequence MFDVSFTELMVIGVIALVVIG. The tract at residues 66–151 is disordered; that stretch reads MDETARSMQT…DKTPPTGSAT (86 aa). Positions 93 to 103 are enriched in basic and acidic residues; the sequence is AELDDTARDAS. Composition is skewed to low complexity over residues 109–122 and 133–151; these read ADAPAEPAPAVASD and APPAAATPADKTPPTGSAT.

Belongs to the TatB family. The Tat system comprises two distinct complexes: a TatABC complex, containing multiple copies of TatA, TatB and TatC subunits, and a separate TatA complex, containing only TatA subunits. Substrates initially bind to the TatABC complex, which probably triggers association of the separate TatA complex to form the active translocon.

It is found in the cell inner membrane. In terms of biological role, part of the twin-arginine translocation (Tat) system that transports large folded proteins containing a characteristic twin-arginine motif in their signal peptide across membranes. Together with TatC, TatB is part of a receptor directly interacting with Tat signal peptides. TatB may form an oligomeric binding site that transiently accommodates folded Tat precursor proteins before their translocation. The polypeptide is Sec-independent protein translocase protein TatB (Bordetella parapertussis (strain 12822 / ATCC BAA-587 / NCTC 13253)).